The sequence spans 712 residues: Protein TAPT1 homolog (712 aa).

A compositionally biased stretch (low complexity) spans 1–21; sequence MNNVPSTSRENSRNPSESSSS. 2 disordered regions span residues 1–22 and 44–66; these read MNNV…SSSI and ITMS…EIET. 7 helical membrane passes run 196–216, 222–242, 305–325, 379–399, 402–422, 470–490, and 497–517; these read FFYL…GALL, TSAE…SMLI, TCGH…LVIL, HIFA…NWNI, FTEM…VDWL, GFIP…TFTL, and IIFG…GVVM. The span at 596 to 619 shows a compositional bias: basic and acidic residues; sequence EIRRSTDRETAVSHLTARSDERTP. Residues 596-712 form a disordered region; it reads EIRRSTDRET…MPEQGVQRIE (117 aa). Over residues 656-667 the composition is skewed to polar residues; sequence TENNTNSNSEQA. Residues 675–692 are compositionally biased toward low complexity; the sequence is TAAPVTSSASTNTNATSS.

This sequence belongs to the TAPT1 family.

It is found in the membrane. The sequence is that of Protein TAPT1 homolog from Caenorhabditis elegans.